Here is a 544-residue protein sequence, read N- to C-terminus: Protein RDR1 (544 aa).

A DNA-binding region (zn(2)-C6 fungal-type) is located at residues C14–C40. The disordered stretch occupies residues K50–D71.

The protein resides in the nucleus. Functionally, may act as a transcriptional repressor of multidrug resistance genes. The polypeptide is Protein RDR1 (RDR1) (Gibberella zeae (strain ATCC MYA-4620 / CBS 123657 / FGSC 9075 / NRRL 31084 / PH-1) (Wheat head blight fungus)).